The sequence spans 183 residues: Probable chemoreceptor glutamine deamidase CheD (183 aa).

Belongs to the CheD family.

The catalysed reaction is L-glutaminyl-[protein] + H2O = L-glutamyl-[protein] + NH4(+). Probably deamidates glutamine residues to glutamate on methyl-accepting chemotaxis receptors (MCPs), playing an important role in chemotaxis. This chain is Probable chemoreceptor glutamine deamidase CheD, found in Zymomonas mobilis subsp. mobilis (strain ATCC 31821 / ZM4 / CP4).